The primary structure comprises 689 residues: MSKHTVLFELGCEELPPKSLKTLRDALQAETVKGLNEAGLNFASVEAYAAPRRLALKIVDVDAAQADTQKRFDGPAVQAAYDAEGKPTKALEGFMRGQGITVEQLSTFQAGKVEKVCYLKDVKGQSLDTLLPQILQTALDNLPIAKRMRSAASRTEFVRPVKWVVLLKDDQVIEATIQDHKAGNVTYGHRFHAPEAVTLAHANDYLAALEKAYVVANFEKRQATIQEQVKKLADEVNATAIVPADLLDEVTSLVEWPVALRATFEERYLAVPQEALITTMQDNQKYFCLINAEGKLQPYFITVSNIESKDPTQIIEGNEKVVRPRLSDAEFFFLQDQKQPLASRKEKLANMVFQAQLGTLWDKSTRIAKLAVALSSITGANPADAEKAALLAKCDLTSELVGEFPELQGIAGTYYARIEGENTEVSEALGEQYLPKFAGDVLPKTKTGTTIALSDRLDTLVGIFGIGQAPTGSKDPFALRRSAIGILRLIIENELDVTIEELVNLALQGYGDIVKDHDKTRADAVAFLEGRYRAKYEDQGVAVDVLQAVQALAPKSPLDFDKRVNAVNHFRTLPEAAALAAANKRVANILAKEATPEGSVVEANLVEDAEKALFAELQAVTPVVEPLLAAKDYTAALSKLAALRAPIDAFFDGVMVMADDAGLKANRLRLLAQLRNLFTAVADVSVLQG.

This sequence belongs to the class-II aminoacyl-tRNA synthetase family. In terms of assembly, tetramer of two alpha and two beta subunits.

Its subcellular location is the cytoplasm. It carries out the reaction tRNA(Gly) + glycine + ATP = glycyl-tRNA(Gly) + AMP + diphosphate. The protein is Glycine--tRNA ligase beta subunit of Acinetobacter baumannii (strain AB307-0294).